The sequence spans 243 residues: Phosphoribosylaminoimidazole-succinocarboxamide synthase (243 aa).

This sequence belongs to the SAICAR synthetase family.

It catalyses the reaction 5-amino-1-(5-phospho-D-ribosyl)imidazole-4-carboxylate + L-aspartate + ATP = (2S)-2-[5-amino-1-(5-phospho-beta-D-ribosyl)imidazole-4-carboxamido]succinate + ADP + phosphate + 2 H(+). It participates in purine metabolism; IMP biosynthesis via de novo pathway; 5-amino-1-(5-phospho-D-ribosyl)imidazole-4-carboxamide from 5-amino-1-(5-phospho-D-ribosyl)imidazole-4-carboxylate: step 1/2. This chain is Phosphoribosylaminoimidazole-succinocarboxamide synthase, found in Lactiplantibacillus plantarum (strain ATCC BAA-793 / NCIMB 8826 / WCFS1) (Lactobacillus plantarum).